Consider the following 399-residue polypeptide: Formate-dependent phosphoribosylglycinamide formyltransferase (399 aa).

N(1)-(5-phospho-beta-D-ribosyl)glycinamide contacts are provided by residues 8-9 (EL) and Glu68. ATP is bound by residues Arg100, Lys141, 146-151 (SSGHGQ), 185-188 (EALA), and Glu193. An ATP-grasp domain is found at 105–308 (VLAHEELGLP…EFALHARAIL (204 aa)). Mg(2+) is bound by residues Glu266 and Glu279. N(1)-(5-phospho-beta-D-ribosyl)glycinamide is bound by residues Asp286, Lys361, and 368 to 369 (RR).

It belongs to the PurK/PurT family. As to quaternary structure, homodimer.

It carries out the reaction N(1)-(5-phospho-beta-D-ribosyl)glycinamide + formate + ATP = N(2)-formyl-N(1)-(5-phospho-beta-D-ribosyl)glycinamide + ADP + phosphate + H(+). Its pathway is purine metabolism; IMP biosynthesis via de novo pathway; N(2)-formyl-N(1)-(5-phospho-D-ribosyl)glycinamide from N(1)-(5-phospho-D-ribosyl)glycinamide (formate route): step 1/1. Its function is as follows. Involved in the de novo purine biosynthesis. Catalyzes the transfer of formate to 5-phospho-ribosyl-glycinamide (GAR), producing 5-phospho-ribosyl-N-formylglycinamide (FGAR). Formate is provided by PurU via hydrolysis of 10-formyl-tetrahydrofolate. This is Formate-dependent phosphoribosylglycinamide formyltransferase from Bifidobacterium longum (strain NCC 2705).